The sequence spans 200 residues: NADH-quinone oxidoreductase chain 10 (200 aa).

Transmembrane regions (helical) follow at residues 2 to 22, 26 to 46, 51 to 71, 90 to 110, and 144 to 164; these read MTFA…MVVI, PVHS…LFVL, FVAM…FLFV, LPLA…AFSG, and VLMF…AIVL.

Belongs to the complex I subunit 6 family. In terms of assembly, NDH-1 is composed of at least 14 different subunits, Nqo1 to Nqo14. The complex has a L-shaped structure, with the hydrophobic arm (subunits Nqo7, Nqo8, Nqo10 to Nqo14) embedded in the inner membrane and the hydrophilic peripheral arm (subunits Nqo1 to Nqo6, Nqo9) protruding into the bacterial cytoplasm. The hydrophilic domain contains all the redox centers.

It localises to the cell inner membrane. The enzyme catalyses a quinone + NADH + 5 H(+)(in) = a quinol + NAD(+) + 4 H(+)(out). Its function is as follows. NDH-1 shuttles electrons from NADH, via FMN and iron-sulfur (Fe-S) centers, to quinones in the respiratory chain. The immediate electron acceptor for the enzyme in this species is believed to be ubiquinone. Couples the redox reaction to proton translocation (for every two electrons transferred, four hydrogen ions are translocated across the cytoplasmic membrane), and thus conserves the redox energy in a proton gradient. The chain is NADH-quinone oxidoreductase chain 10 from Paracoccus denitrificans.